The primary structure comprises 68 residues: Protein transport protein Sec61 gamma-2 subunit (68 aa).

Residues 1–32 (MDKVVKFAEPGRAFAKDSIRLVKRCTKPDRKE) are Cytoplasmic-facing. A helical membrane pass occupies residues 33 to 61 (FQKIAIATAVGFCIMGFIGFFVKLIHIPI). At 62 to 68 (NNIIVGS) the chain is on the extracellular side.

This sequence belongs to the SecE/SEC61-gamma family. Heterotrimeric complex composed of SEC61-alpha, SEC61-beta and SEC61-gamma.

Its subcellular location is the endoplasmic reticulum membrane. In terms of biological role, necessary for protein translocation in the endoplasmic reticulum. The chain is Protein transport protein Sec61 gamma-2 subunit (Sec61gamma) from Drosophila melanogaster (Fruit fly).